A 200-amino-acid polypeptide reads, in one-letter code: Phospholipase A2 inhibitor CgMIP-I (200 aa).

The first 19 residues, 1–19 (MKYLHTICLLFIFVARGNS), serve as a signal peptide directing secretion. Disulfide bonds link C22–C46, C25–C32, C39–C67, C73–C94, C95–C100, C118–C143, and C136–C165. N176 carries an N-linked (GlcNAc...) asparagine glycan.

The protein belongs to the CNF-like-inhibitor family. Homomer of 110 kDa composed of 20-25-kDa subunits. N-glycosylated. The glycosidic chain may contain superficial sialic acid residues. Expressed by the liver.

It is found in the secreted. Inhibits the enzymatic activity of basic phospholipase A2. Specifically neutralizes PLA2, myotoxic, edema-forming, cytolytic, and anti-coagulant activities, as well as intracerebral lethal effect of the basic myotoxin I from the same venom (AC P0DQP6), crotoxin heterodimer and crotoxin subunit B alone. Does not block the enzymatic activity of crude acidic PLA2 fractions from the same venom. The protein is Phospholipase A2 inhibitor CgMIP-I of Cerrophidion godmani (Porthidium godmani).